The chain runs to 442 residues: 3-phosphoshikimate 1-carboxyvinyltransferase (442 aa).

3 residues coordinate 3-phosphoshikimate: Lys25, Ser26, and Arg30. Lys25 serves as a coordination point for phosphoenolpyruvate. Residues Gly96 and Arg124 each contribute to the phosphoenolpyruvate site. Residues Ser171, Ser172, Gln173, Ser203, Asp325, and Lys352 each coordinate 3-phosphoshikimate. A phosphoenolpyruvate-binding site is contributed by Gln173. Asp325 serves as the catalytic Proton acceptor. 3 residues coordinate phosphoenolpyruvate: Arg356, Arg400, and Lys425.

It belongs to the EPSP synthase family. In terms of assembly, monomer.

The protein resides in the cytoplasm. It carries out the reaction 3-phosphoshikimate + phosphoenolpyruvate = 5-O-(1-carboxyvinyl)-3-phosphoshikimate + phosphate. The protein operates within metabolic intermediate biosynthesis; chorismate biosynthesis; chorismate from D-erythrose 4-phosphate and phosphoenolpyruvate: step 6/7. Functionally, catalyzes the transfer of the enolpyruvyl moiety of phosphoenolpyruvate (PEP) to the 5-hydroxyl of shikimate-3-phosphate (S3P) to produce enolpyruvyl shikimate-3-phosphate and inorganic phosphate. In Bordetella parapertussis (strain 12822 / ATCC BAA-587 / NCTC 13253), this protein is 3-phosphoshikimate 1-carboxyvinyltransferase.